Consider the following 472-residue polypeptide: Putative F-box/LRR-repeat protein At5g54820 (472 aa).

Residues 6-54 (QDRLSSLPDILLIMIISFLPLKECVRTSVLSKRWRYLCLETTNLSFKES) enclose the F-box domain. LRR repeat units lie at residues 58–87 (NPDI…SITQ), 135–164 (NGDI…KIYG), 183–208 (IGWV…SIKN), 225–250 (VIEH…KYSG), 283–308 (SSRI…TVCP), and 338–363 (MHTK…GFDI).

The polypeptide is Putative F-box/LRR-repeat protein At5g54820 (Arabidopsis thaliana (Mouse-ear cress)).